A 286-amino-acid polypeptide reads, in one-letter code: ATP synthase gamma chain (286 aa).

It belongs to the ATPase gamma chain family. F-type ATPases have 2 components, CF(1) - the catalytic core - and CF(0) - the membrane proton channel. CF(1) has five subunits: alpha(3), beta(3), gamma(1), delta(1), epsilon(1). CF(0) has three main subunits: a, b and c.

The protein resides in the cell membrane. Functionally, produces ATP from ADP in the presence of a proton gradient across the membrane. The gamma chain is believed to be important in regulating ATPase activity and the flow of protons through the CF(0) complex. The polypeptide is ATP synthase gamma chain (Ruminococcus albus (strain ATCC 27210 / DSM 20455 / JCM 14654 / NCDO 2250 / 7)).